A 216-amino-acid polypeptide reads, in one-letter code: Phosphatidylserine decarboxylase proenzyme (216 aa).

Catalysis depends on serine 182, which acts as the Schiff-base intermediate with substrate; via pyruvic acid. Serine 182 carries the pyruvic acid (Ser); by autocatalysis modification.

Belongs to the phosphatidylserine decarboxylase family. PSD-A subfamily. Heterodimer of a large membrane-associated beta subunit and a small pyruvoyl-containing alpha subunit. Pyruvate serves as cofactor. In terms of processing, is synthesized initially as an inactive proenzyme. Formation of the active enzyme involves a self-maturation process in which the active site pyruvoyl group is generated from an internal serine residue via an autocatalytic post-translational modification. Two non-identical subunits are generated from the proenzyme in this reaction, and the pyruvate is formed at the N-terminus of the alpha chain, which is derived from the carboxyl end of the proenzyme. The post-translation cleavage follows an unusual pathway, termed non-hydrolytic serinolysis, in which the side chain hydroxyl group of the serine supplies its oxygen atom to form the C-terminus of the beta chain, while the remainder of the serine residue undergoes an oxidative deamination to produce ammonia and the pyruvoyl prosthetic group on the alpha chain.

Its subcellular location is the cell membrane. The enzyme catalyses a 1,2-diacyl-sn-glycero-3-phospho-L-serine + H(+) = a 1,2-diacyl-sn-glycero-3-phosphoethanolamine + CO2. Its pathway is phospholipid metabolism; phosphatidylethanolamine biosynthesis; phosphatidylethanolamine from CDP-diacylglycerol: step 2/2. In terms of biological role, catalyzes the formation of phosphatidylethanolamine (PtdEtn) from phosphatidylserine (PtdSer). This chain is Phosphatidylserine decarboxylase proenzyme, found in Burkholderia pseudomallei (strain 1106a).